Here is a 187-residue protein sequence, read N- to C-terminus: Cytochrome c oxidase assembly protein CtaG (187 aa).

At 1–9 the chain is on the cytoplasmic side; the sequence is MSKKSNKNL. The chain crosses the membrane as a helical; Signal-anchor for type II membrane protein span at residues 10–30; that stretch reads AFSLLGLIISMVLLSFASVPI. The Periplasmic segment spans residues 31-187; it reads YNLFCKVTGY…IASLRGNTKY (157 aa).

Belongs to the COX11/CtaG family.

Its subcellular location is the cell inner membrane. Exerts its effect at some terminal stage of cytochrome c oxidase synthesis, probably by being involved in the insertion of the copper B into subunit I. In Rickettsia felis (strain ATCC VR-1525 / URRWXCal2) (Rickettsia azadi), this protein is Cytochrome c oxidase assembly protein CtaG.